The primary structure comprises 155 residues: Prespore-specific protein E (155 aa).

The first 20 residues, 1–20, serve as a signal peptide directing secretion; it reads MRFISIFLIIVALCVSSSWA. N-linked (GlcNAc...) asparagine glycans are attached at residues N22, N82, N85, and N102. A glycan (O-linked (GlcNAc) serine) is linked at S105. N133 is lipidated: GPI-like-anchor amidated asparagine. Residues 134–155 constitute a propeptide, removed in mature form; sequence SADKVAVGIAIIFGALISLLAL.

In terms of processing, the GPI-like-anchor contains a phosphoceramide group, rather than a phosphatidyl group.

Its subcellular location is the cell membrane. This is Prespore-specific protein E (pspE) from Dictyostelium discoideum (Social amoeba).